A 308-amino-acid polypeptide reads, in one-letter code: Lipoyl synthase (308 aa).

7 residues coordinate [4Fe-4S] cluster: cysteine 48, cysteine 53, cysteine 59, cysteine 74, cysteine 78, cysteine 81, and serine 287. The 218-residue stretch at 60–277 (WSRHTATYLA…RSVGEALGLF (218 aa)) folds into the Radical SAM core domain.

Belongs to the radical SAM superfamily. Lipoyl synthase family. It depends on [4Fe-4S] cluster as a cofactor.

The protein resides in the cytoplasm. The enzyme catalyses [[Fe-S] cluster scaffold protein carrying a second [4Fe-4S](2+) cluster] + N(6)-octanoyl-L-lysyl-[protein] + 2 oxidized [2Fe-2S]-[ferredoxin] + 2 S-adenosyl-L-methionine + 4 H(+) = [[Fe-S] cluster scaffold protein] + N(6)-[(R)-dihydrolipoyl]-L-lysyl-[protein] + 4 Fe(3+) + 2 hydrogen sulfide + 2 5'-deoxyadenosine + 2 L-methionine + 2 reduced [2Fe-2S]-[ferredoxin]. It participates in protein modification; protein lipoylation via endogenous pathway; protein N(6)-(lipoyl)lysine from octanoyl-[acyl-carrier-protein]: step 2/2. Catalyzes the radical-mediated insertion of two sulfur atoms into the C-6 and C-8 positions of the octanoyl moiety bound to the lipoyl domains of lipoate-dependent enzymes, thereby converting the octanoylated domains into lipoylated derivatives. This is Lipoyl synthase from Chlamydia muridarum (strain MoPn / Nigg).